A 437-amino-acid chain; its full sequence is Sorting nexin-30 (437 aa).

The tract at residues Met1–Met45 is disordered. Position 38 is a phosphothreonine (Thr38). Residue Ser40 is modified to Phosphoserine. The region spanning Arg89–Ala210 is the PX domain. Arg132, Gln134, Lys162, and Arg176 together coordinate a 1,2-diacyl-sn-glycero-3-phospho-(1D-myo-inositol-3-phosphate). One can recognise a BAR domain in the interval Lys234 to Lys437.

The protein belongs to the sorting nexin family. Heterodimer; heterodimerizes with SNX4.

Its subcellular location is the early endosome membrane. Involved in the regulation of endocytosis and in several stages of intracellular trafficking. Together with SNX4, involved in autophagosome assembly. This Mus musculus (Mouse) protein is Sorting nexin-30.